Consider the following 111-residue polypeptide: Universal stress protein B (111 aa).

Helical transmembrane passes span 1–21 and 90–110; these read MIST…NMAR and FILT…LLIW.

Belongs to the universal stress protein B family.

The protein resides in the cell inner membrane. This is Universal stress protein B from Escherichia fergusonii (strain ATCC 35469 / DSM 13698 / CCUG 18766 / IAM 14443 / JCM 21226 / LMG 7866 / NBRC 102419 / NCTC 12128 / CDC 0568-73).